The chain runs to 604 residues: Deuterosome assembly protein 1 (604 aa).

4 coiled-coil regions span residues Cys14–Thr59, Met85–Gln197, Ile226–Ser278, and Gln336–Lys399. At Ser547 the chain carries Phosphoserine. A coiled-coil region spans residues Ala558–Asn601.

Belongs to the CEP63 family. As to quaternary structure, interacts with CEP152; the interaction is mutually exclusive with CEP63.

It localises to the cytoplasm. Functionally, key structural component of the deuterosome, a structure that promotes de novo centriole amplification in multiciliated cells. Deuterosome-mediated centriole amplification occurs in terminally differentiated multiciliated cells and can generate more than 100 centrioles. Probably sufficient for the specification and formation of the deuterosome inner core. Interacts with CEP152 and recruits PLK4 to activate centriole biogenesis. The protein is Deuterosome assembly protein 1 of Homo sapiens (Human).